The primary structure comprises 417 residues: Gamma-glutamyl phosphate reductase (417 aa).

This sequence belongs to the gamma-glutamyl phosphate reductase family.

It localises to the cytoplasm. It catalyses the reaction L-glutamate 5-semialdehyde + phosphate + NADP(+) = L-glutamyl 5-phosphate + NADPH + H(+). Its pathway is amino-acid biosynthesis; L-proline biosynthesis; L-glutamate 5-semialdehyde from L-glutamate: step 2/2. In terms of biological role, catalyzes the NADPH-dependent reduction of L-glutamate 5-phosphate into L-glutamate 5-semialdehyde and phosphate. The product spontaneously undergoes cyclization to form 1-pyrroline-5-carboxylate. This is Gamma-glutamyl phosphate reductase from Enterobacter sp. (strain 638).